The chain runs to 1707 residues: Replicase large subunit (1707 aa).

Residues H65–Q425 are methyltransferase. The Alphavirus-like MT domain maps to V86–L300. A coiled-coil region spans residues D601 to E622. In terms of domain architecture, (+)RNA virus helicase ATP-binding spans C872–K1033. The interval L901–E1155 is helicase. The (+)RNA virus helicase C-terminal domain occupies R1034–L1187. The 114-residue stretch at Y1449–D1562 folds into the RdRp catalytic domain.

This sequence belongs to the ssRNA positive-strand viruses RNA-directed RNA polymerase family. In terms of assembly, heterodimer of a large and a small subunit.

The enzyme catalyses ATP + H2O = ADP + phosphate + H(+). It catalyses the reaction RNA(n) + a ribonucleoside 5'-triphosphate = RNA(n+1) + diphosphate. Is an RNA-dependent RNA polymerase active in viral RNA replication. Its function is as follows. Is a methyltransferase active in RNA capping and an RNA helicase. Methyltransferase displays a cytoplasmic capping enzyme activity. This function is necessary since all viral RNAs are synthesized in the cytoplasm, and host capping enzymes are restricted to the nucleus. Helicase region probably exhibits NTPase and RNA unwinding activities (Potential). The chain is Replicase large subunit from Tobacco rattle virus (isolate PpK20) (TRV).